The primary structure comprises 712 residues: 1,4-alpha-glucan branching enzyme GlgB (712 aa).

Aspartate 397 functions as the Nucleophile in the catalytic mechanism. Glutamate 450 (proton donor) is an active-site residue.

It belongs to the glycosyl hydrolase 13 family. GlgB subfamily. Monomer.

The catalysed reaction is Transfers a segment of a (1-&gt;4)-alpha-D-glucan chain to a primary hydroxy group in a similar glucan chain.. It functions in the pathway glycan biosynthesis; glycogen biosynthesis. In terms of biological role, catalyzes the formation of the alpha-1,6-glucosidic linkages in glycogen by scission of a 1,4-alpha-linked oligosaccharide from growing alpha-1,4-glucan chains and the subsequent attachment of the oligosaccharide to the alpha-1,6 position. The protein is 1,4-alpha-glucan branching enzyme GlgB of Bradyrhizobium sp. (strain BTAi1 / ATCC BAA-1182).